Here is a 392-residue protein sequence, read N- to C-terminus: Selenide, water dikinase 1 (392 aa).

N-acetylserine is present on serine 2. Residue cysteine 31 is part of the active site. ATP is bound by residues lysine 32, 67–69 (GMD), aspartate 87, aspartate 110, and 161–164 (GGQT). Mg(2+) is bound at residue aspartate 69. Mg(2+) is bound at residue aspartate 110. Aspartate 265 provides a ligand contact to Mg(2+).

Belongs to the selenophosphate synthase 1 family. Class II subfamily. Homodimer. Heterodimer with isoform 3. In terms of assembly, homodimer. Heterodimer with isoform 4. As to quaternary structure, homodimer. Heterodimer with isoform 1. Homodimer. Heterodimer with isoform 2. Mg(2+) serves as cofactor. In terms of tissue distribution, gradually expressed during the cell cycle until G2/M phase and then decreases. As to expression, gradually expressed during the cell cycle until S phase and then decreases.

It localises to the cell membrane. The protein localises to the nucleus membrane. The protein resides in the cytoplasm. It carries out the reaction hydrogenselenide + ATP + H2O = selenophosphate + AMP + phosphate + 2 H(+). With respect to regulation, activated by phosphate ions and by potassium ions. In terms of biological role, synthesizes selenophosphate from selenide and ATP. The polypeptide is Selenide, water dikinase 1 (SEPHS1) (Homo sapiens (Human)).